The primary structure comprises 253 residues: Testis-expressed protein 47 (253 aa).

As to expression, testis-specific.

The polypeptide is Testis-expressed protein 47 (Homo sapiens (Human)).